The chain runs to 75 residues: Transcription attenuation protein MtrB (75 aa).

The protein belongs to the MtrB family. In terms of assembly, oligomer of 11 identical subunits arranged in doughnut-like structure.

Required for transcription attenuation control in the trp operon. This trans-acting factor binds to trinucleotide repeats (GAG or UAG) located in the trp leader transcript causing transcription termination. Binds the leader RNA only in presence of L-tryptophan. This Bacillus subtilis (strain 168) protein is Transcription attenuation protein MtrB (mtrB).